The primary structure comprises 65 residues: LTCLICPEKYCNKVHTCLNGEKICFKRYSERKLLGKRYIRGCADTCPVRKPREIVQCCSTDKCNH.

5 disulfides stabilise this stretch: C3–C24, C6–C11, C17–C42, C46–C57, and C58–C63.

Belongs to the three-finger toxin family. Ancestral subfamily. Orphan group II sub-subfamily. Expressed by the venom gland.

It localises to the secreted. Functionally, binds with low affinity to muscular (alpha-1-beta-1-delta-epsilon/CHRNA1-CHRNB1-CHRND-CHRNE) and very low affinity to neuronal (alpha-7/CHRNA7) nicotinic acetylcholine receptor (nAChR). The sequence is that of Weak neurotoxin 6 from Naja naja (Indian cobra).